Consider the following 308-residue polypeptide: RING-H2 finger protein ATL63 (308 aa).

A helical membrane pass occupies residues 29-49 (VLLAALVFLLLVVLFVLLLHF). Residues 138 to 180 (CVICLGLWEAGDFGRKLRNCGHGFHVECIDMWLSSHSTCPLCR) form an RING-type; atypical zinc finger. Residues 252–308 (VFDDDEEINDGGTRSDRRRSMSMTSSASSSLMRMLSSSSSRSERNKVFPTARQDSSK) are disordered. The segment covering 272 to 291 (MSMTSSASSSLMRMLSSSSS) has biased composition (low complexity).

Belongs to the RING-type zinc finger family. ATL subfamily.

It is found in the membrane. It carries out the reaction S-ubiquitinyl-[E2 ubiquitin-conjugating enzyme]-L-cysteine + [acceptor protein]-L-lysine = [E2 ubiquitin-conjugating enzyme]-L-cysteine + N(6)-ubiquitinyl-[acceptor protein]-L-lysine.. It participates in protein modification; protein ubiquitination. The chain is RING-H2 finger protein ATL63 (ATL63) from Arabidopsis thaliana (Mouse-ear cress).